The following is a 203-amino-acid chain: Dual-action ribosomal maturation protein DarP (203 aa).

Over residues 1–13 (MQPMTRNSRNSPG) the composition is skewed to polar residues. Residues 1-39 (MQPMTRNSRNSPGSRFPGAFAPEPDMDEPKSKSQKKRDM) are disordered. Over residues 27–39 (DEPKSKSQKKRDM) the composition is skewed to basic and acidic residues.

It belongs to the DarP family.

The protein localises to the cytoplasm. Member of a network of 50S ribosomal subunit biogenesis factors which assembles along the 30S-50S interface, preventing incorrect 23S rRNA structures from forming. Promotes peptidyl transferase center (PTC) maturation. The chain is Dual-action ribosomal maturation protein DarP from Cupriavidus pinatubonensis (strain JMP 134 / LMG 1197) (Cupriavidus necator (strain JMP 134)).